The following is a 309-amino-acid chain: Tagatose-6-phosphate kinase (309 aa).

Belongs to the carbohydrate kinase PfkB family. LacC subfamily.

The enzyme catalyses D-tagatofuranose 6-phosphate + ATP = D-tagatofuranose 1,6-bisphosphate + ADP + H(+). It functions in the pathway carbohydrate metabolism; D-tagatose 6-phosphate degradation; D-glyceraldehyde 3-phosphate and glycerone phosphate from D-tagatose 6-phosphate: step 1/2. The polypeptide is Tagatose-6-phosphate kinase (Streptococcus pyogenes serotype M28 (strain MGAS6180)).